The chain runs to 172 residues: Small ribosomal subunit protein bS6 (172 aa).

Residues 100–172 (LPAKRVVKTS…ENKEIEKKED (73 aa)) form a disordered region. The segment covering 107 to 172 (KTSEKNVKED…ENKEIEKKED (66 aa)) has biased composition (basic and acidic residues).

The protein belongs to the bacterial ribosomal protein bS6 family.

Its function is as follows. Binds together with bS18 to 16S ribosomal RNA. In Prochlorococcus marinus (strain MIT 9211), this protein is Small ribosomal subunit protein bS6.